Reading from the N-terminus, the 201-residue chain is Phosphoprotein (201 aa).

Positions 1–70 are disordered; the sequence is MATRPSSLVD…DQRTGREQLS (70 aa). 2 consecutive short sequence motifs (nuclear localization signal) follow at residues 29–36 and 181–193; these read PRPRKIPR and PPRI…SAPT.

As to quaternary structure, homomultimer; only active in its oligomeric state. Interacts with nucleoprotein/N. Interacts with matrix/M protein. Interacts with host TBK1. Interacts with polymerase L. Interacts with host HMGB1; this interaction is required to stabilize RNP on chromosomes. In terms of processing, phosphorylated by host PKC epsilon and casein kinase II.

Its subcellular location is the host nucleus. It localises to the host cytoplasm. In terms of biological role, essential component of the RNA polymerase transcription and replication complex. Acts as a scaffold which brings L in close proximity to the N-RNA complex. Plays a role in the segregation of the viral genome in host daughter cells during mitosis by interacting with host HMGB1, a host chromatin-remodeling DNA architectural protein, thereby stabilizing RNP on chromosomes. Interacts with host TBK1 and thus interferes with activation of cellular antiviral state. Inhibits cellular histone acetyltransferase activities. The protein is Phosphoprotein (P/X) of Bos taurus (Bovine).